The following is a 236-amino-acid chain: 7-cyano-7-deazaguanine synthase 2 (236 aa).

An ATP-binding site is contributed by 11–21 (FSGGQDSATCL). 4 residues coordinate Zn(2+): C199, C214, C217, and C220.

It belongs to the QueC family. It depends on Zn(2+) as a cofactor.

It carries out the reaction 7-carboxy-7-deazaguanine + NH4(+) + ATP = 7-cyano-7-deazaguanine + ADP + phosphate + H2O + H(+). It functions in the pathway purine metabolism; 7-cyano-7-deazaguanine biosynthesis. Its function is as follows. Catalyzes the ATP-dependent conversion of 7-carboxy-7-deazaguanine (CDG) to 7-cyano-7-deazaguanine (preQ(0)). The protein is 7-cyano-7-deazaguanine synthase 2 of Sphingopyxis alaskensis (strain DSM 13593 / LMG 18877 / RB2256) (Sphingomonas alaskensis).